The primary structure comprises 172 residues: MSQRPNPSALIWLLLSVLVVGLDQWSKAWVLSSLPEYTPVPVIDGFWNWYRTYNTGAAFSFLSDAGGWQLWFFTALAVGISGLLAFWLSRTARGQWRSALPYALVIGGAIGNVIDRLMHGHVVDFIQWYIGSHTWPSFNIADSAIVGGAIGIAVFGLFDKSGKQEPGTGNLR.

Helical transmembrane passes span 10–30, 68–88, and 98–118; these read LIWL…KAWV, WQLW…AFWL, and SALP…DRLM. Catalysis depends on residues Asp-124 and Asp-142. The helical transmembrane segment at 138–158 threads the bilayer; that stretch reads FNIADSAIVGGAIGIAVFGLF.

The protein belongs to the peptidase A8 family.

Its subcellular location is the cell inner membrane. The enzyme catalyses Release of signal peptides from bacterial membrane prolipoproteins. Hydrolyzes -Xaa-Yaa-Zaa-|-(S,diacylglyceryl)Cys-, in which Xaa is hydrophobic (preferably Leu), and Yaa (Ala or Ser) and Zaa (Gly or Ala) have small, neutral side chains.. Its pathway is protein modification; lipoprotein biosynthesis (signal peptide cleavage). In terms of biological role, this protein specifically catalyzes the removal of signal peptides from prolipoproteins. The chain is Lipoprotein signal peptidase from Xanthomonas euvesicatoria pv. vesicatoria (strain 85-10) (Xanthomonas campestris pv. vesicatoria).